Reading from the N-terminus, the 396-residue chain is Deoxyuridine 5'-triphosphate nucleotidohydrolase (396 aa).

Substrate is bound by residues 280 to 282 and 380 to 381; these read RSS and FG.

This sequence belongs to the dUTPase family. Mg(2+) is required as a cofactor.

It catalyses the reaction dUTP + H2O = dUMP + diphosphate + H(+). Its function is as follows. Involved in nucleotide metabolism: produces dUMP, the immediate precursor of thymidine nucleotides and decreases the intracellular concentration of dUTP to avoid uracil incorporation into viral DNA. The sequence is that of Deoxyuridine 5'-triphosphate nucleotidohydrolase from Varicella-zoster virus (strain Dumas) (HHV-3).